An 85-amino-acid polypeptide reads, in one-letter code: 4-hydroxyphenylacetate decarboxylase small subunit (85 aa).

[4Fe-4S] cluster-binding residues include H4, C7, C20, C34, C43, C46, C60, and C78.

The protein belongs to the HPA decarboxylase small subunit family. In terms of assembly, heterooctamer consisting of 4 large (HpdB) subunits and 4 small (HpdC) subunits, arranged as a tetramer of heterodimers. [4Fe-4S] cluster is required as a cofactor.

It catalyses the reaction 4-hydroxyphenylacetate + H(+) = 4-methylphenol + CO2. The catalysed reaction is 3,4-dihydroxyphenylacetate + H(+) = 4-methylcatechol + CO2. Functionally, component of the HPA decarboxylase that decarboxylates phenylacetates with a hydroxyl group in the p-position. Active toward 4-hydroxyphenylacetate and 3,4-dihydroxyphenylacetate, forming 4-methylphenol and 4-methylcatechol, respectively. Is likely involved in the catabolism of aromatic amino acids such as tyrosine fermentation. 4-methylphenol (p-cresol) formation provides metabolic toxicity, which allows an active suppression of other microbes and may provide growth advantages for the producers in highly competitive environments. The small subunit is essential for enzymatic activity of HPA decarboxylase, and also seems to be involved in the regulation of the enzyme oligomeric state and catalytic activity. The protein is 4-hydroxyphenylacetate decarboxylase small subunit of Clostridioides difficile (strain CD196) (Peptoclostridium difficile).